Here is a 131-residue protein sequence, read N- to C-terminus: Arsenate reductase 1 (131 aa).

Residues Cys-10, Cys-82, and Cys-89 each act as nucleophile in the active site. 2 disulfides stabilise this stretch: Cys-10/Cys-82 and Cys-82/Cys-89.

It belongs to the low molecular weight phosphotyrosine protein phosphatase family. Thioredoxin-coupled ArsC subfamily.

It is found in the cytoplasm. The enzyme catalyses arsenate + [thioredoxin]-dithiol + H(+) = arsenite + [thioredoxin]-disulfide + H2O. Catalyzes the reduction of arsenate [As(V)] to arsenite [As(III)]. This is Arsenate reductase 1 from Staphylococcus saprophyticus subsp. saprophyticus (strain ATCC 15305 / DSM 20229 / NCIMB 8711 / NCTC 7292 / S-41).